The sequence spans 291 residues: Protease HtpX (291 aa).

2 consecutive transmembrane segments (helical) span residues 4–24 (IALF…VLNI) and 36–56 (LSGL…ISLM). His143 is a binding site for Zn(2+). Glu144 is a catalytic residue. His147 serves as a coordination point for Zn(2+). The next 2 membrane-spanning stretches (helical) occupy residues 151-171 (GDMI…IFLS) and 199-219 (FIVS…LTMW). A Zn(2+)-binding site is contributed by Glu225.

The protein belongs to the peptidase M48B family. Zn(2+) serves as cofactor.

It localises to the cell inner membrane. The polypeptide is Protease HtpX (Aliivibrio fischeri (strain ATCC 700601 / ES114) (Vibrio fischeri)).